The primary structure comprises 1388 residues: DNA-directed RNA polymerase subunit beta' (1388 aa).

Positions 70, 72, 85, and 88 each coordinate Zn(2+). Mg(2+) is bound by residues aspartate 461, aspartate 463, and aspartate 465. Residues cysteine 808, cysteine 882, cysteine 889, and cysteine 892 each contribute to the Zn(2+) site.

It belongs to the RNA polymerase beta' chain family. As to quaternary structure, the RNAP catalytic core consists of 2 alpha, 1 beta, 1 beta' and 1 omega subunit. When a sigma factor is associated with the core the holoenzyme is formed, which can initiate transcription. The cofactor is Mg(2+). Zn(2+) is required as a cofactor.

It catalyses the reaction RNA(n) + a ribonucleoside 5'-triphosphate = RNA(n+1) + diphosphate. Its function is as follows. DNA-dependent RNA polymerase catalyzes the transcription of DNA into RNA using the four ribonucleoside triphosphates as substrates. The polypeptide is DNA-directed RNA polymerase subunit beta' (Acidiphilium cryptum (strain JF-5)).